Reading from the N-terminus, the 249-residue chain is Small ribosomal subunit protein eS6 (249 aa).

2 disordered regions span residues 161 to 181 (PLAK…RLVT) and 194 to 249 (LKKQ…SSQK). The segment covering 216–229 (RSKEAKEKRQEQIA) has biased composition (basic and acidic residues). Residues serine 235, serine 236, serine 240, serine 244, and serine 247 each carry the phosphoserine modification. The segment covering 236 to 249 (SLRASTSKSESSQK) has biased composition (low complexity).

This sequence belongs to the eukaryotic ribosomal protein eS6 family. In terms of assembly, component of the small ribosomal subunit. Part of the small subunit (SSU) processome, composed of more than 70 proteins and the RNA chaperone small nucleolar RNA (snoRNA) U3. Post-translationally, ribosomal protein S6 is the major substrate of protein kinases in eukaryote ribosomes. The phosphorylation is stimulated by growth factors, tumor promoting agents, and mitogens. It is dephosphorylated at growth arrest.

It localises to the cytoplasm. It is found in the nucleus. The protein resides in the nucleolus. In terms of biological role, component of the 40S small ribosomal subunit. Plays an important role in controlling cell growth and proliferation through the selective translation of particular classes of mRNA. Part of the small subunit (SSU) processome, first precursor of the small eukaryotic ribosomal subunit. During the assembly of the SSU processome in the nucleolus, many ribosome biogenesis factors, an RNA chaperone and ribosomal proteins associate with the nascent pre-rRNA and work in concert to generate RNA folding, modifications, rearrangements and cleavage as well as targeted degradation of pre-ribosomal RNA by the RNA exosome. The chain is Small ribosomal subunit protein eS6 (rps6) from Xenopus laevis (African clawed frog).